The sequence spans 1196 residues: Beta/alpha-amylase (1196 aa).

Positions 1 to 35 (MTLYRSLWKKGCMLLLSLVLSLTAFIGSPSNTASA) are cleaved as a signal peptide. The interval 36-454 (AVADDFQASV…IISKAKPDNN (419 aa)) is beta-amylase. D76 contacts substrate. Residues E83 and D87 each coordinate Ca(2+). Positions 116 and 124 each coordinate substrate. A disulfide bridge links C118 with C126. Residue E170 participates in Ca(2+) binding. The active-site Proton donor is E198. Substrate is bound by residues K314, H319, and T357. Residue E394 is the Proton acceptor of the active site. Residues 395–396 (NA) and R423 contribute to the substrate site. Repeats lie at residues 455-558 (GGTG…APAG) and 565-668 (GGTT…APSG). Residues 544-553 (NSGNAGTITS) show a composition bias toward polar residues. The interval 544–566 (NSGNAGTITSGAPAGANPGDGGG) is disordered. The segment at 669–1196 (SVLSVVTSTY…APKEVKVFTK (528 aa)) is alpha-amylase.

This sequence in the N-terminal section; belongs to the glycosyl hydrolase 14 family. The protein in the C-terminal section; belongs to the glycosyl hydrolase 13 family. It depends on Ca(2+) as a cofactor.

It is found in the secreted. It carries out the reaction Hydrolysis of (1-&gt;4)-alpha-D-glucosidic linkages in polysaccharides so as to remove successive maltose units from the non-reducing ends of the chains.. It catalyses the reaction Endohydrolysis of (1-&gt;4)-alpha-D-glucosidic linkages in polysaccharides containing three or more (1-&gt;4)-alpha-linked D-glucose units.. In terms of biological role, the precursor protein is proteolytically cleaved to produce multiform beta-amylases and a 48 kDa alpha-amylase after secretion. In Paenibacillus polymyxa (Bacillus polymyxa), this protein is Beta/alpha-amylase.